Consider the following 275-residue polypeptide: Putative hydro-lyase SPO1111 (275 aa).

This sequence belongs to the D-glutamate cyclase family.

The polypeptide is Putative hydro-lyase SPO1111 (Ruegeria pomeroyi (strain ATCC 700808 / DSM 15171 / DSS-3) (Silicibacter pomeroyi)).